A 908-amino-acid chain; its full sequence is Flap endonuclease GEN homolog 1 (908 aa).

The tract at residues 2-96 (GVNDLWQILE…SKRTQTRYGP (95 aa)) is XPG-N domain. Residues Asp-30, Glu-75, Glu-134, Glu-136, Asp-155, Asp-157, and Asp-208 each coordinate Mg(2+). Residues 122 to 208 (ECLGMPWVQA…VGLAVLLGCD (87 aa)) form an XPG-I domain region. The 5'-3' exonuclease domain stretch occupies residues 208–383 (DYLPKGVPGV…LLVLLTRYDM (176 aa)). The segment at 389 to 463 (GRKTSNQLQP…VYQKQLSETK (75 aa)) is chromodomain. Disordered regions lie at residues 460–482 (SETKGRKQKSMKNKPKGSHLPEA), 629–650 (YESEQGTSDSEGSGRDLQQSNP), 792–834 (RDSS…NKLR), and 853–886 (AEDEENGFSDLGRSPQSFRPCHDKDENSTASWEN). A compositionally biased stretch (basic residues) spans 465 to 476 (RKQKSMKNKPKG). Ser-794 and Ser-795 each carry phosphoserine. A compositionally biased stretch (basic and acidic residues) spans 824–834 (HVRDSTHNKLR).

This sequence belongs to the XPG/RAD2 endonuclease family. GEN subfamily. Largely monomeric, dimerizes on the Holliday junction and the first nick occurs upon dimerization at the junction. Requires Mg(2+) as cofactor. In terms of tissue distribution, expressed in bone marrow and testis and to a lesser extent in thymus, spleen, brain and colon.

The protein localises to the nucleus. In terms of biological role, endonuclease which resolves Holliday junctions (HJs) by the introduction of symmetrically related cuts across the junction point, to produce nicked duplex products in which the nicks can be readily ligated. Four-way DNA intermediates, also known as Holliday junctions, are formed during homologous recombination and DNA repair, and their resolution is necessary for proper chromosome segregation. Cleaves HJs by a nick and counter-nick mechanism involving dual coordinated incisions that lead to the formation of ligatable nicked duplex products. Cleavage of the first strand is rate limiting, while second strand cleavage is rapid. Largely monomeric, dimerizes on the HJ and the first nick occurs upon dimerization at the junction. Efficiently cleaves both single and double HJs contained within large recombination intermediates. Exhibits a weak sequence preference for incision between two G residues that reside in a T-rich region of DNA. Also has endonuclease activity on 5'-flap and replication fork (RF) DNA substrates. In Mus musculus (Mouse), this protein is Flap endonuclease GEN homolog 1 (Gen1).